The chain runs to 379 residues: Succinyl-diaminopimelate desuccinylase (379 aa).

Residue H70 participates in Zn(2+) binding. D72 is an active-site residue. D103 provides a ligand contact to Zn(2+). Catalysis depends on E137, which acts as the Proton acceptor. The Zn(2+) site is built by E138, E166, and H352.

The protein belongs to the peptidase M20A family. DapE subfamily. In terms of assembly, homodimer. The cofactor is Zn(2+). Co(2+) serves as cofactor.

It carries out the reaction N-succinyl-(2S,6S)-2,6-diaminopimelate + H2O = (2S,6S)-2,6-diaminopimelate + succinate. It functions in the pathway amino-acid biosynthesis; L-lysine biosynthesis via DAP pathway; LL-2,6-diaminopimelate from (S)-tetrahydrodipicolinate (succinylase route): step 3/3. Catalyzes the hydrolysis of N-succinyl-L,L-diaminopimelic acid (SDAP), forming succinate and LL-2,6-diaminopimelate (DAP), an intermediate involved in the bacterial biosynthesis of lysine and meso-diaminopimelic acid, an essential component of bacterial cell walls. This Burkholderia cenocepacia (strain ATCC BAA-245 / DSM 16553 / LMG 16656 / NCTC 13227 / J2315 / CF5610) (Burkholderia cepacia (strain J2315)) protein is Succinyl-diaminopimelate desuccinylase.